The sequence spans 260 residues: 3'-5' ssDNA/RNA exonuclease TatD (260 aa).

Residues E92, H128, and H153 each contribute to the a divalent metal cation site.

Belongs to the metallo-dependent hydrolases superfamily. TatD-type hydrolase family. TatD subfamily. In terms of assembly, monomer. Mg(2+) serves as cofactor.

It is found in the cytoplasm. Functionally, 3'-5' exonuclease that prefers single-stranded DNA and RNA. May play a role in the H(2)O(2)-induced DNA damage repair. The protein is 3'-5' ssDNA/RNA exonuclease TatD of Pantoea sp. (strain At-9b).